The chain runs to 92 residues: uncharacterized protein (92 aa).

Residues 1–92 are disordered; it reads MSDAAAPAQA…PSPSQQQVAA (92 aa).

This is an uncharacterized protein from Caenorhabditis elegans.